Reading from the N-terminus, the 819-residue chain is Disintegrin and metalloproteinase domain-containing protein 9 (819 aa).

Residues 1–28 form the signal peptide; that stretch reads MGSGARFPSGTLRVRWLLLLGLVGPVLG. Topologically, residues 29-697 are extracellular; that stretch reads AARPGFQQTS…YNEMNTALRD (669 aa). N-linked (GlcNAc...) asparagine glycosylation is found at Asn125, Asn144, Asn154, and Asn231. The region spanning 212–406 is the Peptidase M12B domain; it reads RYVELFIVVD…KGGNCLLNIP (195 aa). 7 disulfides stabilise this stretch: Cys322–Cys401, Cys363–Cys385, Cys365–Cys370, Cys473–Cys493, Cys644–Cys656, Cys650–Cys662, and Cys664–Cys673. Position 347 (His347) interacts with Zn(2+). Glu348 is an active-site residue. Residues His351 and His357 each contribute to the Zn(2+) site. Asn381 and Asn487 each carry an N-linked (GlcNAc...) asparagine glycan. One can recognise a Disintegrin domain in the interval 414–501; it reads APSCGNKLVD…FCQPDVFIQN (88 aa). Positions 644 to 698 constitute an EGF-like domain; the sequence is CDVQKKCHGHGVCNSNKNCHCENGWAPPNCETKGYGGSVDSGPTYNEMNTALRDG. The chain crosses the membrane as a helical span at residues 698–718; the sequence is GLLVFFFLIVPLIVCAIFIFI. The Cytoplasmic portion of the chain corresponds to 719–819; it reads KRDQLWRSYF…PAPPLYSSLT (101 aa). 2 disordered regions span residues 734–763 and 780–819; these read QTYESDGKNQANPSRQPGSVPRHVSPVTPP and AKQPQQFPSRPPPPQPKVSSQGNLIPARPAPAPPLYSSLT. A compositionally biased stretch (polar residues) spans 735-750; sequence TYESDGKNQANPSRQP. Position 758 is a phosphoserine (Ser758). Thr761 carries the post-translational modification Phosphothreonine.

As to quaternary structure, interacts with SH3GL2 and SNX9 through its cytoplasmic tail. Interacts with ITGA6. The cofactor is Zn(2+). Post-translationally, proteolytically cleaved in the trans-Golgi network before it reaches the plasma membrane to generate a mature protein. The removal of the pro-domain occurs via cleavage at two different sites. Processed most likely by a pro-protein convertase such as furin, at the boundary between the pro-domain and the catalytic domain. An additional upstream cleavage pro-protein convertase site (Arg-56/Glu-57) has an important role in the activation of ADAM9. In terms of processing, phosphorylation is induced in vitro by phorbol-12-myristate-13-acetate (PMA). Widely expressed. Expressed in chondrocytes. Isoform 2 is highly expressed in liver and heart.

The protein resides in the cell membrane. Its subcellular location is the secreted. Its activity is regulated as follows. Synthesized as an inactive form which is proteolytically cleaved to generate an active enzyme. Processing at the upstream site is particularly important for activation of the proenzyme, whereas processing at the boundary between the pro-domain and the catalytic domain does not appear to be essential. Inhibited by hydroxamic acid-based inhibitors. Metalloprotease that cleaves and releases a number of molecules with important roles in tumorigenesis and angiogenesis, such as TEK, KDR, EPHB4, CD40, VCAM1 and CDH5. May mediate cell-cell, cell-matrix interactions and regulate the motility of cells via interactions with integrins. Functionally, may act as alpha-secretase for amyloid precursor protein (APP). The polypeptide is Disintegrin and metalloproteinase domain-containing protein 9 (ADAM9) (Homo sapiens (Human)).